A 158-amino-acid chain; its full sequence is Ecotin-like protein 2 (158 aa).

Belongs to the protease inhibitor I11 (ecotin) family.

This Leishmania major protein is Ecotin-like protein 2.